The following is a 356-amino-acid chain: S-adenosylmethionine:tRNA ribosyltransferase-isomerase (356 aa).

Belongs to the QueA family. In terms of assembly, monomer.

It localises to the cytoplasm. It catalyses the reaction 7-aminomethyl-7-carbaguanosine(34) in tRNA + S-adenosyl-L-methionine = epoxyqueuosine(34) in tRNA + adenine + L-methionine + 2 H(+). Its pathway is tRNA modification; tRNA-queuosine biosynthesis. Transfers and isomerizes the ribose moiety from AdoMet to the 7-aminomethyl group of 7-deazaguanine (preQ1-tRNA) to give epoxyqueuosine (oQ-tRNA). This Escherichia coli O8 (strain IAI1) protein is S-adenosylmethionine:tRNA ribosyltransferase-isomerase.